The sequence spans 425 residues: Serine--tRNA ligase (425 aa).

230–232 (TAE) lines the L-serine pocket. 261–263 (RSE) is a binding site for ATP. An L-serine-binding site is contributed by E284. Position 348–351 (348–351 (EISS)) interacts with ATP. S384 contacts L-serine.

It belongs to the class-II aminoacyl-tRNA synthetase family. Type-1 seryl-tRNA synthetase subfamily. As to quaternary structure, homodimer. The tRNA molecule binds across the dimer.

It is found in the cytoplasm. It carries out the reaction tRNA(Ser) + L-serine + ATP = L-seryl-tRNA(Ser) + AMP + diphosphate + H(+). It catalyses the reaction tRNA(Sec) + L-serine + ATP = L-seryl-tRNA(Sec) + AMP + diphosphate + H(+). Its pathway is aminoacyl-tRNA biosynthesis; selenocysteinyl-tRNA(Sec) biosynthesis; L-seryl-tRNA(Sec) from L-serine and tRNA(Sec): step 1/1. In terms of biological role, catalyzes the attachment of serine to tRNA(Ser). Is also able to aminoacylate tRNA(Sec) with serine, to form the misacylated tRNA L-seryl-tRNA(Sec), which will be further converted into selenocysteinyl-tRNA(Sec). The protein is Serine--tRNA ligase of Streptococcus pyogenes serotype M1.